We begin with the raw amino-acid sequence, 242 residues long: Large ribosomal subunit protein uL3 (242 aa).

Residues 131–165 (GRATHGNSVSHRTHGSTGQRQDPGKVFKGKKMAGH) are disordered. A compositionally biased stretch (polar residues) spans 135–150 (HGNSVSHRTHGSTGQR). Residue Gln-151 is modified to N5-methylglutamine.

Belongs to the universal ribosomal protein uL3 family. Part of the 50S ribosomal subunit. Forms a cluster with proteins L14 and L19. Methylated by PrmB.

Functionally, one of the primary rRNA binding proteins, it binds directly near the 3'-end of the 23S rRNA, where it nucleates assembly of the 50S subunit. This is Large ribosomal subunit protein uL3 from Chelativorans sp. (strain BNC1).